The chain runs to 174 residues: Pediocin PA-1 biosynthesis protein PedC (174 aa).

Its function is as follows. Probably involved in pediocin PA-1 biosynthesis. The protein is Pediocin PA-1 biosynthesis protein PedC (pedC) of Pediococcus acidilactici.